Here is a 356-residue protein sequence, read N- to C-terminus: TPR repeat-containing protein P27G11.02 (356 aa).

The N-terminal 20 residues, 1 to 20 (MRMQWIWKSRRSLQNVFIRR), are a transit peptide targeting the mitochondrion. TPR repeat units follow at residues 194–227 (SRLF…TMAN) and 290–323 (AAAF…RKDD).

The protein resides in the mitochondrion. The sequence is that of TPR repeat-containing protein P27G11.02 from Schizosaccharomyces pombe (strain 972 / ATCC 24843) (Fission yeast).